A 382-amino-acid chain; its full sequence is ATP phosphoribosyltransferase regulatory subunit (382 aa).

It belongs to the class-II aminoacyl-tRNA synthetase family. HisZ subfamily. As to quaternary structure, heteromultimer composed of HisG and HisZ subunits.

The protein localises to the cytoplasm. The protein operates within amino-acid biosynthesis; L-histidine biosynthesis; L-histidine from 5-phospho-alpha-D-ribose 1-diphosphate: step 1/9. Required for the first step of histidine biosynthesis. May allow the feedback regulation of ATP phosphoribosyltransferase activity by histidine. This is ATP phosphoribosyltransferase regulatory subunit from Burkholderia thailandensis (strain ATCC 700388 / DSM 13276 / CCUG 48851 / CIP 106301 / E264).